The chain runs to 187 residues: Large ribosomal subunit protein uL6c (187 aa).

It belongs to the universal ribosomal protein uL6 family. Part of the 50S ribosomal subunit.

The protein resides in the plastid. It is found in the chloroplast. Functionally, binds 23S rRNA. The protein is Large ribosomal subunit protein uL6c (rpl6) of Thalassiosira pseudonana (Marine diatom).